Consider the following 206-residue polypeptide: Octanoyltransferase (206 aa).

The BPL/LPL catalytic domain maps to proline 30–isoleucine 206. Residues arginine 69 to histidine 76, serine 137 to glycine 139, and glycine 150 to alanine 152 each bind substrate. The active-site Acyl-thioester intermediate is cysteine 168.

The protein belongs to the LipB family.

The protein resides in the cytoplasm. It catalyses the reaction octanoyl-[ACP] + L-lysyl-[protein] = N(6)-octanoyl-L-lysyl-[protein] + holo-[ACP] + H(+). Its pathway is protein modification; protein lipoylation via endogenous pathway; protein N(6)-(lipoyl)lysine from octanoyl-[acyl-carrier-protein]: step 1/2. Functionally, catalyzes the transfer of endogenously produced octanoic acid from octanoyl-acyl-carrier-protein onto the lipoyl domains of lipoate-dependent enzymes. Lipoyl-ACP can also act as a substrate although octanoyl-ACP is likely to be the physiological substrate. This chain is Octanoyltransferase, found in Francisella tularensis subsp. tularensis (strain FSC 198).